Consider the following 250-residue polypeptide: MGNHSGKRELSAEKASKDGEIHRGEAGKKRSVGKLSQTASEDSDVFGEADAIQNNGTSAEDTAVTDSKHTADPKNNWQGAHPADPGNRPHLIRLFSRDAPGREDNTFKDRPSESDELQTIQEDPTAASGGLDVMASQKRPSQRSKYLATASTMDHARHGFLPRHRDTGILDSIGRFFSGDRGAPKRGSGKDSHTRTTHYGSLPQKSQHGRTQDENPVVHFFKNIVTPRTPPPSQGKGGRDSRSGSPMARR.

A compositionally biased stretch (basic and acidic residues) spans 1 to 28 (MGNHSGKRELSAEKASKDGEIHRGEAGK). The segment at 1–150 (MGNHSGKREL…SQRSKYLATA (150 aa)) is disordered. An N-acetylalanine modification is found at Gly-2. Ser-31 and Ser-40 each carry phosphoserine. A compositionally biased stretch (basic and acidic residues) spans 95-113 (FSRDAPGREDNTFKDRPSE). Residue Ser-96 is modified to Phosphothreonine. Glu-113 carries the phosphoserine modification. Glu-122 is subject to Phosphothreonine. Thr-125 is subject to Phosphotyrosine. Ala-135, Arg-139, Ser-141, and Ser-144 each carry phosphoserine. Phosphotyrosine occurs at positions 146 and 147. Thr-149 bears the Phosphothreonine mark. Residue Ser-151 is modified to Phosphoserine. Ser-151 is subject to Phosphotyrosine. Thr-152 carries the phosphothreonine modification. Arg-157 and Arg-163 each carry citrulline. Thr-167 carries the phosphothreonine modification. Ser-172 is modified (phosphoserine). Residues Arg-175 and Arg-181 each carry the omega-N-methylarginine modification. Positions 175-250 (RFFSGDRGAP…SRSGSPMARR (76 aa)) are disordered. Phosphoserine is present on Ser-188. At Thr-197 the chain carries Phosphothreonine. The span at 197-206 (THYGSLPQKS) shows a compositional bias: polar residues. Position 199 is a phosphotyrosine (Tyr-199). Ser-206 carries the post-translational modification Phosphoserine. 3 positions are modified to phosphothreonine: Thr-211, Thr-226, and Thr-229. Gln-234 bears the Deamidated glutamine mark. Arg-239 carries the citrulline modification. Ser-241 carries the post-translational modification Phosphoserine. A Phosphoserine; by UHMK1 modification is found at Ser-245. Position 250 is a citrulline (Arg-250).

It belongs to the myelin basic protein family. As to quaternary structure, homodimer. As in other animals, several charge isomers may be produced as a result of optional post-translational modifications, such as phosphorylation of serine or threonine residues, deamidation of glutamine or asparagine residues, citrullination and methylation of arginine residues. Post-translationally, methylated on arginine residues; decreases with the age of the animal, making MBP more cationic. In terms of processing, phosphorylated by TAOK2, VRK2, MAPK11, MAPK12, MAPK14 and MINK1. Proteolytically cleaved in B cell lysosomes by cathepsin CTSG which degrades the major immunogenic MBP epitope and prevents the activation of MBP-specific autoreactive T cells. As to expression, in the embryo, isoform 1-isoform 3 are found in neurons within the central nervous system (primarily in pioneer neurons important in the formation of the cortex) and the peripheral nervous system. They are also expressed in the thymus, gut, lung and kidney. In the adult, isoform 1-isoform 3 are highly expressed in the brain (mainly in brain regions rich in oligodendrocytes) and spleen. Lower levels are seen in the heart, kidney and lung. Isoform 2 is also found in cells of the immune system. The isoforms missing the 134 first amino acids (isoform 4-isoform 13) are almost exclusively produced in the myelin-forming cells, the mature oligodendrocytes.

The protein localises to the myelin membrane. It is found in the cytoplasm. Its subcellular location is the nucleus. The classic group of MBP isoforms (isoform 4-isoform 13) are with PLP the most abundant protein components of the myelin membrane in the CNS. They have a role in both its formation and stabilization. The non-classic group of MBP isoforms (isoform 1-isoform 3/Golli-MBPs) may preferentially have a role in the early developing brain long before myelination, maybe as components of transcriptional complexes, and may also be involved in signaling pathways in T-cells and neural cells. Differential splicing events combined to optional post-translational modifications give a wide spectrum of isomers, with each of them potentially having a specialized function. The sequence is that of Myelin basic protein (Mbp) from Mus musculus (Mouse).